We begin with the raw amino-acid sequence, 505 residues long: DEAD-box ATP-dependent RNA helicase 38 (505 aa).

The segment at 1 to 81 (MADGGKPPTP…DQGPPLLDDS (81 aa)) is disordered. The span at 27–44 (KAAAAAEAASSSSSNEPA) shows a compositional bias: low complexity. The Q motif signature appears at 100-129 (AAFEDLKLTPELLKGLHDEMGFSRPSKIQA). In terms of domain architecture, Helicase ATP-binding spans 134-310 (MILTPPYKDL…TRVIKDGNQI (177 aa)). Position 147–154 (147–154 (AHNGSGKT)) interacts with ATP. Positions 254-257 (DEAD) match the DEAD box motif. The Helicase C-terminal domain occupies 338 to 493 (VIKDKIFEFG…EVRNWQSEED (156 aa)).

It belongs to the DEAD box helicase family. DDX19/DBP5 subfamily.

It is found in the cytoplasm. The protein resides in the nucleus. It carries out the reaction ATP + H2O = ADP + phosphate + H(+). ATP-dependent RNA helicase essential for mRNA export from the nucleus. Plays an important role in the positive regulation of CBF/DREB transcription factors. The sequence is that of DEAD-box ATP-dependent RNA helicase 38 from Oryza sativa subsp. japonica (Rice).